The sequence spans 573 residues: DNA ligase (573 aa).

Residue Glu-250 coordinates ATP. Lys-252 acts as the N6-AMP-lysine intermediate in catalysis. Residues Arg-257, Arg-272, Glu-301, Phe-342, Arg-432, and Lys-438 each contribute to the ATP site.

This sequence belongs to the ATP-dependent DNA ligase family. It depends on Mg(2+) as a cofactor.

The catalysed reaction is ATP + (deoxyribonucleotide)n-3'-hydroxyl + 5'-phospho-(deoxyribonucleotide)m = (deoxyribonucleotide)n+m + AMP + diphosphate.. Functionally, DNA ligase that seals nicks in double-stranded DNA during DNA replication, DNA recombination and DNA repair. In Methanococcus maripaludis (strain C7 / ATCC BAA-1331), this protein is DNA ligase.